Consider the following 28-residue polypeptide: Putative fruR/shl operon leader peptide (28 aa).

This is Putative fruR/shl operon leader peptide (fruL) from Escherichia coli O6:H1 (strain CFT073 / ATCC 700928 / UPEC).